Here is a 206-residue protein sequence, read N- to C-terminus: Orotate phosphoribosyltransferase (206 aa).

5-phospho-alpha-D-ribose 1-diphosphate-binding positions include arginine 97, lysine 98, lysine 101, and 125–133; that span reads NDVIASGRS. Arginine 157 serves as a coordination point for orotate.

It belongs to the purine/pyrimidine phosphoribosyltransferase family. PyrE subfamily. As to quaternary structure, homodimer. It depends on Mg(2+) as a cofactor.

It carries out the reaction orotidine 5'-phosphate + diphosphate = orotate + 5-phospho-alpha-D-ribose 1-diphosphate. It participates in pyrimidine metabolism; UMP biosynthesis via de novo pathway; UMP from orotate: step 1/2. Its function is as follows. Catalyzes the transfer of a ribosyl phosphate group from 5-phosphoribose 1-diphosphate to orotate, leading to the formation of orotidine monophosphate (OMP). This chain is Orotate phosphoribosyltransferase, found in Chlamydia felis (strain Fe/C-56) (Chlamydophila felis).